The sequence spans 41 residues: Sucrose porin (41 aa).

Positions 1–22 are cleaved as a signal peptide; it reads MYRKSTLAMLIALLTSAASAHA.

Belongs to the porin LamB (TC 1.B.3) family. Homotrimer.

The protein resides in the cell outer membrane. In terms of biological role, porin for sucrose uptake. In Salmonella thompson, this protein is Sucrose porin (scrY).